Reading from the N-terminus, the 333-residue chain is Homeobox protein Hox-A1 (333 aa).

Positions 61 to 82 (ITSPHHHHHHHHHPQPATYQTS) are disordered. Over residues 64 to 74 (PHHHHHHHHHP) the composition is skewed to basic residues. The segment at 74 to 202 (PQPATYQTSG…PASETSSPAQ (129 aa)) is interaction with OGT. Threonine 152 is a glycosylation site (O-linked (GlcNAc) threonine). An Antp-type hexapeptide motif is present at residues 203–208 (TFDWMK). The segment at residues 227-286 (QPNAVRTNFTTKQLTELEKEFHFNKYLTRARSEIAASLQLNETQVKIWFQNRRMKQKKRE) is a DNA-binding region (homeobox). Positions 279–333 (RMKQKKREKEGLLPMSPATPPGSDEKTEESSEKSSSSPSAPSPASSTSDTLTTSH) are disordered. Positions 301–310 (SDEKTEESSE) are enriched in basic and acidic residues. Low complexity predominate over residues 311 to 333 (KSSSSPSAPSPASSTSDTLTTSH).

The protein belongs to the Antp homeobox family. Labial subfamily. In terms of assembly, interacts with OGT (via TPR repeats domain); the interaction takes place mainly in the nucleus. Forms a DNA-binding heterodimer with transcription factor PBX1. Glycosylated by OGT.

The protein localises to the nucleus. Sequence-specific transcription factor. Regulates multiple developmental processes including brainstem, inner and outer ear, abducens nerve and cardiovascular development and morphogenesis as well as cognition and behavior. Also part of a developmental regulatory system that provides cells with specific positional identities on the anterior-posterior axis. Acts on the anterior body structures. Seems to act in the maintenance and/or generation of hindbrain segments. Activates transcription in the presence of PBX1A and PKNOX1. In Rattus norvegicus (Rat), this protein is Homeobox protein Hox-A1 (Hoxa1).